The sequence spans 498 residues: ATP synthase subunit beta, chloroplastic (498 aa).

Residue 172–179 (GGAGVGKT) participates in ATP binding.

It belongs to the ATPase alpha/beta chains family. F-type ATPases have 2 components, CF(1) - the catalytic core - and CF(0) - the membrane proton channel. CF(1) has five subunits: alpha(3), beta(3), gamma(1), delta(1), epsilon(1). CF(0) has four main subunits: a(1), b(1), b'(1) and c(9-12).

It localises to the plastid. The protein localises to the chloroplast thylakoid membrane. The catalysed reaction is ATP + H2O + 4 H(+)(in) = ADP + phosphate + 5 H(+)(out). In terms of biological role, produces ATP from ADP in the presence of a proton gradient across the membrane. The catalytic sites are hosted primarily by the beta subunits. This chain is ATP synthase subunit beta, chloroplastic, found in Vitis vinifera (Grape).